A 422-amino-acid chain; its full sequence is Isocitrate dehydrogenase [NADP] (422 aa).

An NADP(+)-binding site is contributed by T94. Residues S103, N105, R109, R119, and R143 each contribute to the D-threo-isocitrate site. Residue D310 participates in Mg(2+) binding. NADP(+)-binding positions include 344–350 (HGTAPKY), N357, Y396, and R400.

It belongs to the isocitrate and isopropylmalate dehydrogenases family. As to quaternary structure, homodimer. It depends on Mg(2+) as a cofactor. The cofactor is Mn(2+).

The enzyme catalyses D-threo-isocitrate + NADP(+) = 2-oxoglutarate + CO2 + NADPH. Catalyzes the oxidative decarboxylation of isocitrate to 2-oxoglutarate and carbon dioxide with the concomitant reduction of NADP(+). In Staphylococcus aureus (strain MSSA476), this protein is Isocitrate dehydrogenase [NADP] (icd).